The following is a 403-amino-acid chain: Ribosomal RNA large subunit methyltransferase I (403 aa).

The PUA domain occupies 9 to 88; the sequence is YPRLVLSKGR…ESIDIAFFTR (80 aa).

The protein belongs to the methyltransferase superfamily. RlmI family.

It localises to the cytoplasm. The enzyme catalyses cytidine(1962) in 23S rRNA + S-adenosyl-L-methionine = 5-methylcytidine(1962) in 23S rRNA + S-adenosyl-L-homocysteine + H(+). In terms of biological role, specifically methylates the cytosine at position 1962 (m5C1962) of 23S rRNA. In Salmonella agona (strain SL483), this protein is Ribosomal RNA large subunit methyltransferase I.